Here is a 100-residue protein sequence, read N- to C-terminus: Large ribosomal subunit protein uL23 (100 aa).

It belongs to the universal ribosomal protein uL23 family. As to quaternary structure, part of the 50S ribosomal subunit. Contacts protein L29, and trigger factor when it is bound to the ribosome.

Its function is as follows. One of the early assembly proteins it binds 23S rRNA. One of the proteins that surrounds the polypeptide exit tunnel on the outside of the ribosome. Forms the main docking site for trigger factor binding to the ribosome. This chain is Large ribosomal subunit protein uL23, found in Mycobacterium ulcerans (strain Agy99).